Here is a 204-residue protein sequence, read N- to C-terminus: Large ribosomal subunit protein uL4 (204 aa).

The segment at 47 to 69 (KAQKTRAEVSGGGKKPWRQKGTG) is disordered.

This sequence belongs to the universal ribosomal protein uL4 family. In terms of assembly, part of the 50S ribosomal subunit.

One of the primary rRNA binding proteins, this protein initially binds near the 5'-end of the 23S rRNA. It is important during the early stages of 50S assembly. It makes multiple contacts with different domains of the 23S rRNA in the assembled 50S subunit and ribosome. In terms of biological role, forms part of the polypeptide exit tunnel. The sequence is that of Large ribosomal subunit protein uL4 from Cellvibrio japonicus (strain Ueda107) (Pseudomonas fluorescens subsp. cellulosa).